We begin with the raw amino-acid sequence, 313 residues long: Protein HEXIM2 (313 aa).

Polar residues predominate over residues 1–13; the sequence is MATVNHTNCNTAS. Residues 1-78 are disordered; it reads MATVNHTNCN…RGSRTQSPGG (78 aa). A phosphoserine mark is found at Ser-28, Ser-52, Ser-75, and Ser-80. Positions 64–77 are enriched in polar residues; the sequence is SSCNIRGSRTQSPG. Disordered stretches follow at residues 111–139, 155–194, and 267–313; these read EKQQ…PLAP, PNLD…DFSE, and QENE…AGDR. Residues 112–131 show a composition bias toward basic and acidic residues; sequence KQQRDERQSQRASRVREEMF. The interaction with P-TEFb stretch occupies residues 139–142; sequence PYNT. Basic and acidic residues predominate over residues 179 to 194; the sequence is GQGRAHGEFQQRDFSE. Residues 207-276 adopt a coiled-coil conformation; it reads RSKQELVRDY…QENEMWNREG (70 aa). Residues 225–286 form an interaction with CCNT1, HEXIM1 and HEXIM2 region; the sequence is QAEQETRRLR…GYCDQEKPAS (62 aa).

The protein belongs to the HEXIM family. Homooligomer and heterooligomer with HEXIM1; probably dimeric. Core component of the 7SK RNP complex, at least composed of 7SK RNA, LARP7, MEPCE, HEXIM1 (or HEXIM2) and P-TEFb (composed of CDK9 and CCNT1/cyclin-T1). Interacts with CCNT2.

The protein localises to the nucleus. Transcriptional regulator which functions as a general RNA polymerase II transcription inhibitor. Core component of the 7SK RNP complex: in cooperation with 7SK snRNA sequesters P-TEFb in a large inactive 7SK snRNP complex preventing RNA polymerase II phosphorylation and subsequent transcriptional elongation. This Mus musculus (Mouse) protein is Protein HEXIM2 (Hexim2).